Consider the following 346-residue polypeptide: NADH-ubiquinone oxidoreductase chain 2 (346 aa).

The next 10 membrane-spanning stretches (helical) occupy residues His25–Ser45, Ala52–Phe72, Cys95–Phe115, Leu124–Leu144, Leu149–Gly169, Ile178–Pro198, Leu200–Ala220, Ala242–Pro262, Glu274–Leu294, and Ala326–Leu346.

This sequence belongs to the complex I subunit 2 family. As to quaternary structure, core subunit of respiratory chain NADH dehydrogenase (Complex I) which is composed of 45 different subunits.

The protein localises to the mitochondrion inner membrane. It carries out the reaction a ubiquinone + NADH + 5 H(+)(in) = a ubiquinol + NAD(+) + 4 H(+)(out). Functionally, core subunit of the mitochondrial membrane respiratory chain NADH dehydrogenase (Complex I) which catalyzes electron transfer from NADH through the respiratory chain, using ubiquinone as an electron acceptor. Essential for the catalytic activity and assembly of complex I. The protein is NADH-ubiquinone oxidoreductase chain 2 (MT-ND2) of Gallus gallus (Chicken).